The sequence spans 544 residues: Epidermal growth factor-like protein 6 (544 aa).

The first 30 residues, Met1–Ser30, serve as a signal peptide directing secretion. The EGF-like 1 domain maps to Arg63 to Asn98. 6 disulfides stabilise this stretch: Cys67–Cys80, Cys71–Cys86, Cys88–Cys97, Cys104–Cys115, Cys111–Cys124, and Cys126–Cys138. The EGF-like 2; calcium-binding domain maps to Asp100 to Ser139. An EGF-like 3 domain is found at Cys144 to Cys178. The region spanning Asp180 to Asn218 is the EGF-like 4; calcium-binding domain. Disulfide bonds link Cys184/Cys197, Cys191/Cys206, Cys229/Cys242, Cys236/Cys251, and Cys253/Cys264. Residues Asp225–Ser265 form the EGF-like 5; calcium-binding domain. The segment at Gly332 to Asn357 is disordered. Residues Asn333–Gly367 adopt a coiled-coil conformation. Residues Asp334 to Asn357 show a composition bias toward acidic residues. An MAM domain is found at Val399–Asp543.

The protein belongs to the nephronectin family.

Its subcellular location is the secreted. The protein localises to the extracellular space. It localises to the extracellular matrix. It is found in the basement membrane. Its function is as follows. May play a role in organ morphogenesis. Promotes matrix assembly. The chain is Epidermal growth factor-like protein 6 (egfl6) from Xenopus laevis (African clawed frog).